The primary structure comprises 283 residues: Pyridoxal kinase PdxY (283 aa).

Ser8 contributes to the substrate binding site. ATP contacts are provided by Asp110 and Glu147. Residue Asp219 coordinates substrate.

This sequence belongs to the pyridoxine kinase family. PdxY subfamily. In terms of assembly, homodimer. The cofactor is Mg(2+).

It catalyses the reaction pyridoxal + ATP = pyridoxal 5'-phosphate + ADP + H(+). It functions in the pathway cofactor metabolism; pyridoxal 5'-phosphate salvage; pyridoxal 5'-phosphate from pyridoxal: step 1/1. Pyridoxal kinase involved in the salvage pathway of pyridoxal 5'-phosphate (PLP). Catalyzes the phosphorylation of pyridoxal to PLP. The chain is Pyridoxal kinase PdxY from Corynebacterium diphtheriae (strain ATCC 700971 / NCTC 13129 / Biotype gravis).